Consider the following 515-residue polypeptide: 3-[(3aS,4S,7aS)-7a-methyl-1,5-dioxo-octahydro-1H-inden-4-yl]propanoyl:CoA ligase (515 aa).

ATP-binding positions include 185 to 193 (TSGTTGRSK), Asp398, Arg413, and Lys504.

The protein belongs to the ATP-dependent AMP-binding enzyme family.

It catalyses the reaction 3-[(3aS,4S,7aS)-7a-methyl-1,5-dioxo-octahydro-1H-inden-4-yl]propanoate + ATP + CoA = 3-[(3aS,4S,7aS)-7a-methyl-1,5-dioxo-octahydro-1H-inden-4-yl]propanoyl-CoA + AMP + diphosphate. Functionally, involved in the catabolism of the rings C and D of cholesterol. Catalyzes the ATP-dependent CoA thioesterification of 3aalpha-H-4alpha(3'-propanoate)-7abeta-methylhexahydro-1,5-indanedione (HIP). The polypeptide is 3-[(3aS,4S,7aS)-7a-methyl-1,5-dioxo-octahydro-1H-inden-4-yl]propanoyl:CoA ligase (Rhodococcus jostii (strain RHA1)).